We begin with the raw amino-acid sequence, 581 residues long: NADH-quinone oxidoreductase subunit C/D (581 aa).

Positions 1–172 (MSAFELVTEL…PLFNMTASLF (172 aa)) are NADH dehydrogenase I subunit C. Residues 196–581 (ELMILNYGPH…IDYVMSDVDR (386 aa)) are NADH dehydrogenase I subunit D.

The protein in the N-terminal section; belongs to the complex I 30 kDa subunit family. This sequence in the C-terminal section; belongs to the complex I 49 kDa subunit family. NDH-1 is composed of 13 different subunits. Subunits NuoB, CD, E, F, and G constitute the peripheral sector of the complex.

It is found in the cell inner membrane. It catalyses the reaction a quinone + NADH + 5 H(+)(in) = a quinol + NAD(+) + 4 H(+)(out). Its function is as follows. NDH-1 shuttles electrons from NADH, via FMN and iron-sulfur (Fe-S) centers, to quinones in the respiratory chain. The immediate electron acceptor for the enzyme in this species is believed to be ubiquinone. Couples the redox reaction to proton translocation (for every two electrons transferred, four hydrogen ions are translocated across the cytoplasmic membrane), and thus conserves the redox energy in a proton gradient. This is NADH-quinone oxidoreductase subunit C/D from Rhodopseudomonas palustris (strain ATCC BAA-98 / CGA009).